The chain runs to 1661 residues: Pentafunctional AROM polypeptide (1661 aa).

The tract at residues 1–388 (MATNGVKAEP…YEKKASSVVD (388 aa)) is 3-dehydroquinate synthase. NAD(+)-binding positions include 50-52 (DTN), 87-90 (ETSK), 118-120 (GGV), and Asp123. Arg134 contacts 7-phospho-2-dehydro-3-deoxy-D-arabino-heptonate. 143–144 (TT) contributes to the NAD(+) binding site. Residues Asp150 and Lys156 each coordinate 7-phospho-2-dehydro-3-deoxy-D-arabino-heptonate. Residue Lys165 coordinates NAD(+). 7-phospho-2-dehydro-3-deoxy-D-arabino-heptonate is bound at residue Asn166. Residues 183–186 (FLET) and Asn194 each bind NAD(+). Residue Glu198 participates in Zn(2+) binding. 7-phospho-2-dehydro-3-deoxy-D-arabino-heptonate is bound by residues 198–201 (EVVK) and Lys254. The Proton acceptor; for 3-dehydroquinate synthase activity role is filled by Glu264. 7-phospho-2-dehydro-3-deoxy-D-arabino-heptonate contacts are provided by residues 268–272 (RNLLN) and His275. His275 contacts Zn(2+). The Proton acceptor; for 3-dehydroquinate synthase activity role is filled by His279. 2 residues coordinate 7-phospho-2-dehydro-3-deoxy-D-arabino-heptonate: His291 and Lys360. Zn(2+) is bound at residue His291. The segment at 401 to 850 (VHPGIPSDLN…WDILNQQFKA (450 aa)) is EPSP synthase. Cys832 functions as the For EPSP synthase activity in the catalytic mechanism. The tract at residues 872-1064 (QKSIFIIGMR…KKKKQSFFVC (193 aa)) is shikimate kinase. 879–886 (GMRGAGKT) is an ATP binding site. Positions 1065–1285 (LSAPNLEPCA…TAPGQLSAAD (221 aa)) are 3-dehydroquinase. His1188 (proton acceptor; for 3-dehydroquinate dehydratase activity) is an active-site residue. Lys1216 serves as the catalytic Schiff-base intermediate with substrate; for 3-dehydroquinate dehydratase activity. Residues 1298 to 1661 (TKKFCIFGSP…LTYSWSLGDW (364 aa)) form a shikimate dehydrogenase region.

It in the N-terminal section; belongs to the sugar phosphate cyclases superfamily. Dehydroquinate synthase family. This sequence in the 2nd section; belongs to the EPSP synthase family. In the 3rd section; belongs to the shikimate kinase family. The protein in the 4th section; belongs to the type-I 3-dehydroquinase family. It in the C-terminal section; belongs to the shikimate dehydrogenase family. In terms of assembly, homodimer. Zn(2+) serves as cofactor.

The protein localises to the cytoplasm. The catalysed reaction is 7-phospho-2-dehydro-3-deoxy-D-arabino-heptonate = 3-dehydroquinate + phosphate. It carries out the reaction 3-dehydroquinate = 3-dehydroshikimate + H2O. The enzyme catalyses shikimate + NADP(+) = 3-dehydroshikimate + NADPH + H(+). It catalyses the reaction shikimate + ATP = 3-phosphoshikimate + ADP + H(+). The catalysed reaction is 3-phosphoshikimate + phosphoenolpyruvate = 5-O-(1-carboxyvinyl)-3-phosphoshikimate + phosphate. It participates in metabolic intermediate biosynthesis; chorismate biosynthesis; chorismate from D-erythrose 4-phosphate and phosphoenolpyruvate: step 2/7. Its pathway is metabolic intermediate biosynthesis; chorismate biosynthesis; chorismate from D-erythrose 4-phosphate and phosphoenolpyruvate: step 3/7. It functions in the pathway metabolic intermediate biosynthesis; chorismate biosynthesis; chorismate from D-erythrose 4-phosphate and phosphoenolpyruvate: step 4/7. The protein operates within metabolic intermediate biosynthesis; chorismate biosynthesis; chorismate from D-erythrose 4-phosphate and phosphoenolpyruvate: step 5/7. It participates in metabolic intermediate biosynthesis; chorismate biosynthesis; chorismate from D-erythrose 4-phosphate and phosphoenolpyruvate: step 6/7. In terms of biological role, the AROM polypeptide catalyzes 5 consecutive enzymatic reactions in prechorismate polyaromatic amino acid biosynthesis. In Phaeosphaeria nodorum (strain SN15 / ATCC MYA-4574 / FGSC 10173) (Glume blotch fungus), this protein is Pentafunctional AROM polypeptide.